We begin with the raw amino-acid sequence, 205 residues long: 3-isopropylmalate dehydratase small subunit (205 aa).

Belongs to the LeuD family. LeuD type 1 subfamily. In terms of assembly, heterodimer of LeuC and LeuD.

It carries out the reaction (2R,3S)-3-isopropylmalate = (2S)-2-isopropylmalate. It functions in the pathway amino-acid biosynthesis; L-leucine biosynthesis; L-leucine from 3-methyl-2-oxobutanoate: step 2/4. Catalyzes the isomerization between 2-isopropylmalate and 3-isopropylmalate, via the formation of 2-isopropylmaleate. The chain is 3-isopropylmalate dehydratase small subunit from Christiangramia forsetii (strain DSM 17595 / CGMCC 1.15422 / KT0803) (Gramella forsetii).